A 367-amino-acid chain; its full sequence is Heme A synthase (367 aa).

Transmembrane regions (helical) follow at residues 26 to 46, 111 to 131, 139 to 159, 174 to 194, and 212 to 232; these read IRGW…VGGA, LLAR…WLTG, LPLL…WWMV, LATH…IYRG, and AGII…VAGL. H274 is a heme binding site. A run of 3 helical transmembrane segments spans residues 276 to 296, 305 to 325, and 327 to 347; these read AGAY…LRAA, SVLL…TLLL, and VPIV…GFAI. Position 335 (H335) interacts with heme.

Belongs to the COX15/CtaA family. Type 2 subfamily. Interacts with CtaB. It depends on heme b as a cofactor.

The protein localises to the cell membrane. It carries out the reaction Fe(II)-heme o + 2 A + H2O = Fe(II)-heme a + 2 AH2. The protein operates within porphyrin-containing compound metabolism; heme A biosynthesis; heme A from heme O: step 1/1. Functionally, catalyzes the conversion of heme O to heme A by two successive hydroxylations of the methyl group at C8. The first hydroxylation forms heme I, the second hydroxylation results in an unstable dihydroxymethyl group, which spontaneously dehydrates, resulting in the formyl group of heme A. In Sinorhizobium fredii (strain NBRC 101917 / NGR234), this protein is Heme A synthase.